A 264-amino-acid polypeptide reads, in one-letter code: Acid phosphatase (264 aa).

An N-terminal signal peptide occupies residues M1 to A28.

Belongs to the class A bacterial acid phosphatase family. Mg(2+) is required as a cofactor. The cofactor is Zn(2+).

The protein resides in the periplasm. It carries out the reaction a phosphate monoester + H2O = an alcohol + phosphate. This Zymomonas mobilis subsp. mobilis (strain ATCC 31821 / ZM4 / CP4) protein is Acid phosphatase (phoC).